The sequence spans 256 residues: Ribonuclease HII (256 aa).

One can recognise an RNase H type-2 domain in the interval 73 to 256; that stretch reads KLIAGIDEAG…RVSFTKNFIV (184 aa). The a divalent metal cation site is built by aspartate 79, glutamate 80, and aspartate 171.

It belongs to the RNase HII family. Requires Mn(2+) as cofactor. Mg(2+) serves as cofactor.

The protein localises to the cytoplasm. It catalyses the reaction Endonucleolytic cleavage to 5'-phosphomonoester.. In terms of biological role, endonuclease that specifically degrades the RNA of RNA-DNA hybrids. The sequence is that of Ribonuclease HII from Acetivibrio thermocellus (strain ATCC 27405 / DSM 1237 / JCM 9322 / NBRC 103400 / NCIMB 10682 / NRRL B-4536 / VPI 7372) (Clostridium thermocellum).